Consider the following 147-residue polypeptide: Transcriptional repressor NrdR (147 aa).

A zinc finger spans residues 3–34 (CPYCGNVETTVVETRESDEGDAVRRRRRCSAC). The 91-residue stretch at 49–139 (PAVVKKNGDR…VYREFEDIDA (91 aa)) folds into the ATP-cone domain.

This sequence belongs to the NrdR family. It depends on Zn(2+) as a cofactor.

Functionally, negatively regulates transcription of bacterial ribonucleotide reductase nrd genes and operons by binding to NrdR-boxes. This chain is Transcriptional repressor NrdR, found in Leptothrix cholodnii (strain ATCC 51168 / LMG 8142 / SP-6) (Leptothrix discophora (strain SP-6)).